Reading from the N-terminus, the 109-residue chain is Cell division suppressor protein YneA (109 aa).

The region spanning 39–90 (SEVNVSEGDSLWALADQYAGKSDMAKADFVSWVEKENNLADGHVEAGESVVI) is the LysM domain.

It belongs to the YneA family.

It is found in the cytoplasm. In terms of biological role, inhibits cell division during the SOS response. Affects a later stage of the cell division protein assembly, after the assembly of the Z ring, by probably suppressing recruitment of FtsL and/or DivIC to the division machinery. This is Cell division suppressor protein YneA from Listeria monocytogenes serotype 4b (strain F2365).